The sequence spans 276 residues: ESX-2 secretion-associated protein EspG2 (276 aa).

Belongs to the EspG family. As to quaternary structure, interacts specifically with ESX-2-dependent PE/PPE proteins.

The protein localises to the cytoplasm. In terms of biological role, specific chaperone for cognate PE/PPE proteins. Plays an important role in preventing aggregation of PE/PPE dimers. This is ESX-2 secretion-associated protein EspG2 from Mycobacterium tuberculosis (strain CDC 1551 / Oshkosh).